The chain runs to 504 residues: ATP synthase subunit alpha, chloroplastic (504 aa).

Position 170–177 (170–177) interacts with ATP; sequence GDRQTGKT.

This sequence belongs to the ATPase alpha/beta chains family. In terms of assembly, F-type ATPases have 2 components, CF(1) - the catalytic core - and CF(0) - the membrane proton channel. CF(1) has five subunits: alpha(3), beta(3), gamma(1), delta(1), epsilon(1). CF(0) has four main subunits: a, b, b' and c.

The protein resides in the plastid. The protein localises to the chloroplast thylakoid membrane. It carries out the reaction ATP + H2O + 4 H(+)(in) = ADP + phosphate + 5 H(+)(out). Its function is as follows. Produces ATP from ADP in the presence of a proton gradient across the membrane. The alpha chain is a regulatory subunit. In Jasminum nudiflorum (Winter jasmine), this protein is ATP synthase subunit alpha, chloroplastic.